Here is a 461-residue protein sequence, read N- to C-terminus: Serine carboxypeptidase-like 45 (461 aa).

A signal peptide spans 1-24 (MSPLQWLTISFALIIFHSLTVSSS). 3 disulfide bridges follow: Cys86–Cys340, Cys243–Cys261, and Cys286–Cys309. An N-linked (GlcNAc...) asparagine glycan is attached at Asn168. The active site involves Ser177. Asn244 is a glycosylation site (N-linked (GlcNAc...) asparagine). Active-site residues include Asp377 and His434.

This sequence belongs to the peptidase S10 family. Ubiquitous.

The protein localises to the secreted. Probable carboxypeptidase. This Arabidopsis thaliana (Mouse-ear cress) protein is Serine carboxypeptidase-like 45 (SCPL45).